Reading from the N-terminus, the 292-residue chain is Peroxisomal 2,4-dienoyl-CoA reductase SPS19 [(3E)-enoyl-CoA-producing] (292 aa).

I36, D85, and K145 together coordinate NADP(+). The active-site Proton donor is S162. K180 lines the NADP(+) pocket. K180 acts as the Lowers pKa of active site Tyr in catalysis. K188 is covalently cross-linked (Glycyl lysine isopeptide (Lys-Gly) (interchain with G-Cter in ubiquitin)). NADP(+) is bound at residue I209. The Microbody targeting signal signature appears at 290 to 292; the sequence is SKL.

It belongs to the short-chain dehydrogenases/reductases (SDR) family. Homodimer.

It localises to the peroxisome. The enzyme catalyses a (2E,4Z)-dienoyl-CoA + NADPH + H(+) = a 4,5-saturated-(3E)-enoyl-CoA + NADP(+). It catalyses the reaction a (2E,4E)-dienoyl-CoA + NADPH + H(+) = a 4,5-saturated-(3E)-enoyl-CoA + NADP(+). Auxiliary enzyme of beta-oxidation. Participates in the degradation of unsaturated fatty enoyl-CoA esters having double bonds in both even- and odd-numbered positions in peroxisome. Catalyzes the NADP-dependent reduction of 2,4-dienoyl-CoA to yield trans-3-enoyl-CoA. Dispensable for growth and sporulation on solid acetate and oleate media, but is essential for these processes to occur on petroselineate. This chain is Peroxisomal 2,4-dienoyl-CoA reductase SPS19 [(3E)-enoyl-CoA-producing] (SPS19), found in Saccharomyces cerevisiae (strain ATCC 204508 / S288c) (Baker's yeast).